Reading from the N-terminus, the 102-residue chain is Nucleoid-associated protein WS1681 (102 aa).

It belongs to the YbaB/EbfC family. As to quaternary structure, homodimer.

It is found in the cytoplasm. It localises to the nucleoid. In terms of biological role, binds to DNA and alters its conformation. May be involved in regulation of gene expression, nucleoid organization and DNA protection. This chain is Nucleoid-associated protein WS1681, found in Wolinella succinogenes (strain ATCC 29543 / DSM 1740 / CCUG 13145 / JCM 31913 / LMG 7466 / NCTC 11488 / FDC 602W) (Vibrio succinogenes).